A 200-amino-acid chain; its full sequence is dITP/XTP pyrophosphatase (200 aa).

7–12 (TSNKHK) contacts substrate. Residues E38 and D73 each contribute to the Mg(2+) site. Catalysis depends on D73, which acts as the Proton acceptor. Substrate contacts are provided by residues S74, 154-157 (FGYD), K177, and 182-183 (HR).

The protein belongs to the HAM1 NTPase family. Homodimer. Mg(2+) is required as a cofactor.

It catalyses the reaction XTP + H2O = XMP + diphosphate + H(+). The enzyme catalyses dITP + H2O = dIMP + diphosphate + H(+). The catalysed reaction is ITP + H2O = IMP + diphosphate + H(+). Its function is as follows. Pyrophosphatase that catalyzes the hydrolysis of nucleoside triphosphates to their monophosphate derivatives, with a high preference for the non-canonical purine nucleotides XTP (xanthosine triphosphate), dITP (deoxyinosine triphosphate) and ITP. Seems to function as a house-cleaning enzyme that removes non-canonical purine nucleotides from the nucleotide pool, thus preventing their incorporation into DNA/RNA and avoiding chromosomal lesions. This Campylobacter jejuni subsp. jejuni serotype O:6 (strain 81116 / NCTC 11828) protein is dITP/XTP pyrophosphatase.